Reading from the N-terminus, the 88-residue chain is Phosphocarrier protein HPr (88 aa).

The region spanning 2-88 (AQKTFKVTAD…ETMKSEGLGE (87 aa)) is the HPr domain. Ser12 is modified (phosphoserine). Residue His15 is the Pros-phosphohistidine intermediate; alternate of the active site. His15 is modified (tele-phosphohistidine; alternate). Phosphoserine; by HPrK/P is present on Ser46.

Belongs to the HPr family. Phosphorylated during sporulation.

The protein resides in the cytoplasm. Its activity is regulated as follows. Phosphorylation on Ser-46 inhibits the phosphoryl transfer from enzyme I to HPr. Functionally, general (non sugar-specific) component of the phosphoenolpyruvate-dependent sugar phosphotransferase system (sugar PTS). This major carbohydrate active-transport system catalyzes the phosphorylation of incoming sugar substrates concomitantly with their translocation across the cell membrane. The phosphoryl group from phosphoenolpyruvate (PEP) is transferred to the phosphoryl carrier protein HPr by enzyme I. Phospho-HPr then transfers it to the PTS EIIA domain. P-Ser-HPr interacts with the catabolite control protein A (CcpA), forming a complex that binds to DNA at the catabolite response elements cre, operator sites preceding a large number of catabolite-regulated genes. Thus, P-Ser-HPr is a corepressor in carbon catabolite repression (CCR), a mechanism that allows bacteria to coordinate and optimize the utilization of available carbon sources. P-Ser-HPr also plays a role in inducer exclusion, in which it probably interacts with several non-PTS permeases and inhibits their transport activity. The chain is Phosphocarrier protein HPr (ptsH) from Bacillus subtilis (strain 168).